We begin with the raw amino-acid sequence, 236 residues long: Small ribosomal subunit protein uS2c (236 aa).

It belongs to the universal ribosomal protein uS2 family.

Its subcellular location is the plastid. It localises to the chloroplast. The sequence is that of Small ribosomal subunit protein uS2c (rps2) from Morus indica (Mulberry).